The primary structure comprises 61 residues: Small ribosomal subunit protein uS14 (61 aa).

Cys24, Cys27, Cys40, and Cys43 together coordinate Zn(2+).

Belongs to the universal ribosomal protein uS14 family. Zinc-binding uS14 subfamily. In terms of assembly, part of the 30S ribosomal subunit. Contacts proteins S3 and S10. Zn(2+) is required as a cofactor.

Functionally, binds 16S rRNA, required for the assembly of 30S particles and may also be responsible for determining the conformation of the 16S rRNA at the A site. The sequence is that of Small ribosomal subunit protein uS14 from Campylobacter jejuni subsp. jejuni serotype O:6 (strain 81116 / NCTC 11828).